We begin with the raw amino-acid sequence, 178 residues long: Stathmin-2-A (178 aa).

The 141-residue stretch at 38 to 178 (DDMEIKQLNK…RNKEQLELSG (141 aa)) folds into the SLD domain. Residues 75–178 (KKKDVSLGEI…RNKEQLELSG (104 aa)) adopt a coiled-coil conformation.

This sequence belongs to the stathmin family. As to expression, nervous tissue.

Its subcellular location is the cytoplasm. It localises to the membrane. It is found in the cell projection. The protein resides in the lamellipodium. The protein is Stathmin-2-A (stmn2-a) of Xenopus laevis (African clawed frog).